A 1641-amino-acid polypeptide reads, in one-letter code: MPENGRLRRTSARLTQNGTSTSSSTIYQNGKRTSQHAQETSTASNKKRKVSTQSKEDKLSDIIVDFNLAVNELYQLKEYKSIISWDPIENSSANDRGIKAEFEEFVKNNDYRLVWDKEIENNSNIDSLPLRFQKKKLAEQNKLLDDKFSIRQNVLASSKMLEESLVNKTRDEVKIESTFKAIQSQEKAGSKLKTPSQTSNAKTNIRKSGSTTPKRGNENGSRKQALEDQDEIIELSDDSSVVEIESDLSDAETHYRIKCIKKTVPPPLVTHPSHIPQWRPENLEDGNRSTGRLIQLKDSSSSSKIINFDPTPLEIIQLKDEVIAAPKLTEKLQNFLNNDFKTPIIDESNVPDYNFTRDEYNTIMSQQEKLLRKLYHKVNIENSLELNGDKIERRKVILPQSNIKLTDPFRNTFSVKPKLHGAANNATHQDYLLAQGMAFSKVHQQMRKQHHLRTRKIAAMIDQHFKKKKGEKERLAKEREQNLKKMSRLTMQAVKKRWNQAQKVYQIIQNEKEEELKKIKGRQHLSEMLEHSTQLLEAQLTSSREPTVEAESDDNSTTFDDNTNDSDNFSSSEEEENEEDNTQQQINGNKKYDVNGKSNDENDMSLSVEELRKKYADLETSVEPLSSNVTSDKERESETSSEDAESSDDDDTDVTRGLASLYQNDEVADFATTTFEYSAEEKKLIEDLNQESDSRMNSLLDSDSVSSISDSESSEESSSDTEMDQSNVSEPPRSSETGSNTGLASLFTNGTIVSDEEDDASISSNFENESDESMNSSDRELEVNGNGKIDKIASTDEDDSNVEIVNGSKVKDVPIPSLLRGTLRPYQKQGLNWLASLYNNNTNGILADEMGLGKTIQTISLLAYLACEHHKWGPHLIIVPTSVMLNWEMEFKKFAPGFKVLTYYGSPQQRAQKRKGWNKPDAFHVCITSYQLVVQDQQSFKRRRWTYMILDEAHNIKNFRSTRWRALLNFNTENRLLLTGTPLQNNLMELWSLLYFLMPSSKVNQAMPEGFANLDDFQQWFGKPVDRILEQTSAGNSDLIDENERTTQKMDEETRNTVARLHQVLRPYLLRRLKKDVEKQMPGKYEHIVYCRLSKRQRFLYDDFMSRAKTKETLASGNFLSIINCLMQLRKVCNHPDLFEVRPIVTSFAMPRSIPSYYQSTNELVKRQFNKDEKVSFQALNLDVTGCENMNYFVCQSTGKLMTTEPFQDQINKLKILLVEFENSDPINYVSYYQRLRREEQAEIKEKLEHVVYLNNLRCGRKPIYGESLLRLLTVNAHDFSDEPYNKYCLTLSGRVDKMNDTIEKYSIITPAAVALDMKDQLIPISTKQRILHEVAENKIDNPFHKAQVKLSIAFPDKTLLQYDCGKLQKLATLLQELTSQGHRALIFTQMTKVLDILEQFLNIHGYRYMRLDGATKIEDRQLLTEKFNRDPKIPVFILSTRSGGLGINLTGADTVIFYDSDWNPAMDKQCQDRCHRIGQVRDVHIYRFVSEYTIESNIIKKANQKRQLDNVVIQEGEFTTDYFGKFSVRDLVSDSNIGKEITDRTIDFSGDAKMGNVLAQAEDEEDRVAAGAALKEVAIDDDDFKEETRSATTGATPAPTETNALSTTDGDAAFIDVDYEDGIGHIDEYMLRFISDGYYL.

Disordered regions lie at residues 1–54 (MPEN…STQS) and 184–230 (SQEK…EDQD). 2 stretches are compositionally biased toward polar residues: residues 12 to 44 (ARLTQNGTSTSSSTIYQNGKRTSQHAQETSTAS) and 184 to 214 (SQEKAGSKLKTPSQTSNAKTNIRKSGSTTPK). Basic and acidic residues predominate over residues 215 to 226 (RGNENGSRKQAL). The HSA domain maps to 416–488 (KPKLHGAANN…REQNLKKMSR (73 aa)). A coiled-coil region spans residues 461 to 521 (IDQHFKKKKG…KEEELKKIKG (61 aa)). Disordered stretches follow at residues 537 to 669 (EAQL…EVAD) and 686 to 782 (EDLN…RELE). The span at 555 to 571 (NSTTFDDNTNDSDNFSS) shows a compositional bias: low complexity. Positions 572–581 (SEEEENEEDN) are enriched in acidic residues. Positions 590–600 (KKYDVNGKSND) are enriched in basic and acidic residues. The span at 639 to 652 (TSSEDAESSDDDDT) shows a compositional bias: acidic residues. The segment covering 701–711 (DSDSVSSISDS) has biased composition (low complexity). The span at 712 to 723 (ESSEESSSDTEM) shows a compositional bias: acidic residues. A compositionally biased stretch (polar residues) spans 727 to 752 (NVSEPPRSSETGSNTGLASLFTNGTI). The 166-residue stretch at 835–1000 (ASLYNNNTNG…WSLLYFLMPS (166 aa)) folds into the Helicase ATP-binding domain. 848–855 (DEMGLGKT) is an ATP binding site. A DEAH box motif is present at residues 951 to 954 (DEAH). Residues 1367–1520 (KLQKLATLLQ…NVVIQEGEFT (154 aa)) enclose the Helicase C-terminal domain. The tract at residues 1586–1607 (KEETRSATTGATPAPTETNALS) is disordered. The span at 1591–1605 (SATTGATPAPTETNA) shows a compositional bias: low complexity.

It belongs to the SNF2/RAD54 helicase family. SWR1 subfamily. Component of the SWR1 chromatin-remodeling complex.

The protein resides in the nucleus. It catalyses the reaction ATP + H2O = ADP + phosphate + H(+). Its function is as follows. Catalytic component of the SWR1 complex which mediates the ATP-dependent exchange of histone H2A for the H2A variant HZT1 leading to transcriptional regulation of selected genes by chromatin remodeling. This is Helicase SWR1 (SWR1) from Candida albicans (strain SC5314 / ATCC MYA-2876) (Yeast).